Consider the following 386-residue polypeptide: Chorismate synthase (386 aa).

Positions 45 and 51 each coordinate NADP(+). Residues 131–133 (RTS), 251–252 (QG), Ser294, 309–313 (KPIPS), and Arg335 contribute to the FMN site.

It belongs to the chorismate synthase family. As to quaternary structure, homotetramer. It depends on FMNH2 as a cofactor.

It carries out the reaction 5-O-(1-carboxyvinyl)-3-phosphoshikimate = chorismate + phosphate. The protein operates within metabolic intermediate biosynthesis; chorismate biosynthesis; chorismate from D-erythrose 4-phosphate and phosphoenolpyruvate: step 7/7. Its function is as follows. Catalyzes the anti-1,4-elimination of the C-3 phosphate and the C-6 proR hydrogen from 5-enolpyruvylshikimate-3-phosphate (EPSP) to yield chorismate, which is the branch point compound that serves as the starting substrate for the three terminal pathways of aromatic amino acid biosynthesis. This reaction introduces a second double bond into the aromatic ring system. The polypeptide is Chorismate synthase (Clostridium tetani (strain Massachusetts / E88)).